The sequence spans 386 residues: Succinate--CoA ligase [ADP-forming] subunit beta (386 aa).

Positions 9–244 (KELLKQFGVP…LDEEDPAEIE (236 aa)) constitute an ATP-grasp domain. ATP-binding positions include Lys46, 53-55 (GRG), Glu99, Ala102, and Glu107. Mg(2+) is bound by residues Asn199 and Asp213. Residues Asn264 and 321–323 (GIM) each bind substrate.

Belongs to the succinate/malate CoA ligase beta subunit family. In terms of assembly, heterotetramer of two alpha and two beta subunits. Requires Mg(2+) as cofactor.

It catalyses the reaction succinate + ATP + CoA = succinyl-CoA + ADP + phosphate. The enzyme catalyses GTP + succinate + CoA = succinyl-CoA + GDP + phosphate. It participates in carbohydrate metabolism; tricarboxylic acid cycle; succinate from succinyl-CoA (ligase route): step 1/1. Its function is as follows. Succinyl-CoA synthetase functions in the citric acid cycle (TCA), coupling the hydrolysis of succinyl-CoA to the synthesis of either ATP or GTP and thus represents the only step of substrate-level phosphorylation in the TCA. The beta subunit provides nucleotide specificity of the enzyme and binds the substrate succinate, while the binding sites for coenzyme A and phosphate are found in the alpha subunit. This is Succinate--CoA ligase [ADP-forming] subunit beta from Bordetella avium (strain 197N).